We begin with the raw amino-acid sequence, 888 residues long: MSTSQAEHTRVHPRRRPLKTAPPSLSASTSIESCVADSSSSSPNLSLRKGETFHSPSPPPSDDIDPVLSFRSLPQRSPTCTRSLEAIAAREQRMVDYLSNLNLNSLEPSSPLSDKDNGDDLPVPRAILQAHIDSQSMADRVGRPTQSSELHTPSKVRKTHCHASDSGLGTSLSSENMSASDKSKGIFFYLLNLQPHFLFANMLVIVKAGQLSFESQSSAKATTRMTQSAITSSISAFDAKISQKRQLGLPACKQIERLIIKPILREERLKPFHPLVQSIPQRIVDREIGCLRDLEKTLLWLAPVSDFQKRNGVGCIAHSFSRVLKNYAASRASYLRFCEFTIQCLHTSVYHLNERDQRLPADRPYTNGYFLDLVAQIRRYAAMINESRSSMPSNREPAQNGAKASAPKYVVSPPSRWFARFNIVRSEHITLEGGLSKNGRPAELVVHKDGEMISLRTGKPYEENAVPAMKRSLSLGSVDEGVERSMARRKKNAPPMDINQKCKDCDKVFKRPCDLTKHEKTHSRPWKCTEPSCKYHEIGWPTEKERDRHINDKHSKAPALYKCKFAPCTYSSKRESNCKQHMEKAHGWDYVRSKHNGRNSKKASNGATPQTPSIATPSSKAQGITTPLTGSEPSPFEPVTAYPPNPPFSFADPPTQTGSGDFPLFTTNSPFEDLAAGVNDFSPLPTTSLDFQAFQSQLEGADPNGLIPLTFDRQSFDSGSPVPDLINETMGFDTSPVASTDSSSLNFDLAWSQLDAQNVEEEFTTLTMQMLTPEHSVSMSALNSFSRDPSISNPSPLPVQKVENSLYTPDSCHVDEGVSDLFDSGYQHKADFMLFDQHTNFGASSVNMSSTCQLSALHNSNQMFPSLNTPDLNYMTQGWPQDMEMEHF.

3 disordered regions span residues 1–78 (MSTS…QRSP), 132–176 (IDSQ…SSEN), and 388–407 (RSSMPSNREPAQNGAKASAP). Polar residues-rich tracts occupy residues 23-32 (PSLSASTSIE), 167-176 (GLGTSLSSEN), and 388-397 (RSSMPSNREP). C2H2-type zinc fingers lie at residues 500-522 (QKCKDCDKVFKRPCDLTKHEKTH) and 561-586 (YKCKFAPCTYSSKRESNCKQHMEKAH). The tract at residues 589–663 (DYVRSKHNGR…PTQTGSGDFP (75 aa)) is disordered. A compositionally biased stretch (polar residues) spans 602–632 (KASNGATPQTPSIATPSSKAQGITTPLTGSE).

The protein localises to the nucleus. Transcription factor that contributes to azole resistance by coregulating the expression of the drug target erg11A and the drug efflux pump mdr1. Binds to the 5'-AGGCA-3' motif in the promoters of ergosterol biosynthesis and drug pump genes to regulate their expression. Is able to interact with the promoters of sltA, sltB, erg11A, erg13A, erg24A, mdr1, abcE and mfsC. Involved in antifungal drug resistance to azoles, terbinafine, and simvastatin but not amphotericin B or caspofungin. The chain is C2H2 zinc finger transcription factor sltA from Aspergillus fumigatus (strain CBS 144.89 / FGSC A1163 / CEA10) (Neosartorya fumigata).